Here is a 921-residue protein sequence, read N- to C-terminus: Isoleucine--tRNA ligase (921 aa).

A 'HIGH' region motif is present at residues 57–67; sequence PYANGDIHMGH. Residue glutamate 552 participates in L-isoleucyl-5'-AMP binding. The short motif at 593-597 is the 'KMSKS' region element; sequence KMSKS. Position 596 (lysine 596) interacts with ATP. Zn(2+) contacts are provided by cysteine 888, cysteine 891, cysteine 908, and cysteine 911.

This sequence belongs to the class-I aminoacyl-tRNA synthetase family. IleS type 1 subfamily. As to quaternary structure, monomer. Zn(2+) is required as a cofactor.

It is found in the cytoplasm. The enzyme catalyses tRNA(Ile) + L-isoleucine + ATP = L-isoleucyl-tRNA(Ile) + AMP + diphosphate. In terms of biological role, catalyzes the attachment of isoleucine to tRNA(Ile). As IleRS can inadvertently accommodate and process structurally similar amino acids such as valine, to avoid such errors it has two additional distinct tRNA(Ile)-dependent editing activities. One activity is designated as 'pretransfer' editing and involves the hydrolysis of activated Val-AMP. The other activity is designated 'posttransfer' editing and involves deacylation of mischarged Val-tRNA(Ile). The polypeptide is Isoleucine--tRNA ligase (Bacillus cereus (strain AH820)).